We begin with the raw amino-acid sequence, 272 residues long: Indole-3-glycerol phosphate synthase (272 aa).

Belongs to the TrpC family.

It catalyses the reaction 1-(2-carboxyphenylamino)-1-deoxy-D-ribulose 5-phosphate + H(+) = (1S,2R)-1-C-(indol-3-yl)glycerol 3-phosphate + CO2 + H2O. Its pathway is amino-acid biosynthesis; L-tryptophan biosynthesis; L-tryptophan from chorismate: step 4/5. In Mycobacterium tuberculosis (strain ATCC 25177 / H37Ra), this protein is Indole-3-glycerol phosphate synthase.